A 393-amino-acid polypeptide reads, in one-letter code: Pyrimidine monooxygenase RutA (393 aa).

FMN-binding positions include 79 to 80, N145, E154, 170 to 171, and S220; these read IK and RY.

It belongs to the NtaA/SnaA/DszA monooxygenase family. RutA subfamily.

The enzyme catalyses uracil + FMNH2 + NADH + O2 = (Z)-3-ureidoacrylate + FMN + NAD(+) + H2O + H(+). It carries out the reaction thymine + FMNH2 + NADH + O2 = (Z)-2-methylureidoacrylate + FMN + NAD(+) + H2O + H(+). Functionally, catalyzes the pyrimidine ring opening between N-3 and C-4 by an unusual flavin hydroperoxide-catalyzed mechanism, adding oxygen atoms in the process to yield ureidoacrylate peracid, that immediately reacts with FMN forming ureidoacrylate and FMN-N(5)-oxide. The FMN-N(5)-oxide reacts spontaneously with NADH to produce FMN. Requires the flavin reductase RutF to regenerate FMN in vivo. In Escherichia coli O139:H28 (strain E24377A / ETEC), this protein is Pyrimidine monooxygenase RutA.